A 393-amino-acid chain; its full sequence is Major outer membrane protein P.IA (393 aa).

The first 19 residues, 1–19, serve as a signal peptide directing secretion; that stretch reads MRKKLTALVLSALPLAAVA.

It belongs to the Gram-negative porin family. In terms of assembly, homotrimer.

It localises to the cell outer membrane. Functionally, serves as a slightly cation selective porin. Major antigen on the gonococcal cell surface and it may have pathogenic properties in addition to its porin activity. The chain is Major outer membrane protein P.IA (porA) from Neisseria meningitidis serogroup C.